Here is a 147-residue protein sequence, read N- to C-terminus: Large ribosomal subunit protein uL11 (147 aa).

This sequence belongs to the universal ribosomal protein uL11 family. In terms of assembly, part of the ribosomal stalk of the 50S ribosomal subunit. Interacts with L10 and the large rRNA to form the base of the stalk. L10 forms an elongated spine to which L12 dimers bind in a sequential fashion forming a multimeric L10(L12)X complex. In terms of processing, one or more lysine residues are methylated.

Forms part of the ribosomal stalk which helps the ribosome interact with GTP-bound translation factors. The chain is Large ribosomal subunit protein uL11 from Phocaeicola vulgatus (strain ATCC 8482 / DSM 1447 / JCM 5826 / CCUG 4940 / NBRC 14291 / NCTC 11154) (Bacteroides vulgatus).